The primary structure comprises 432 residues: Adenylosuccinate synthetase (432 aa).

GTP-binding positions include 13 to 19 (GDEGKGK) and 41 to 43 (GHT). Residue Asp14 is the Proton acceptor of the active site. Asp14 and Gly41 together coordinate Mg(2+). IMP-binding positions include 14–17 (DEGK), 39–42 (NAGH), Thr130, Arg144, Gln225, Thr240, and Arg304. His42 acts as the Proton donor in catalysis. 300–306 (ATTGRRR) is a binding site for substrate. Residues Arg306, 332–334 (KLD), and 415–417 (STG) contribute to the GTP site.

Belongs to the adenylosuccinate synthetase family. As to quaternary structure, homodimer. Mg(2+) is required as a cofactor.

It is found in the cytoplasm. It catalyses the reaction IMP + L-aspartate + GTP = N(6)-(1,2-dicarboxyethyl)-AMP + GDP + phosphate + 2 H(+). Its pathway is purine metabolism; AMP biosynthesis via de novo pathway; AMP from IMP: step 1/2. Functionally, plays an important role in the de novo pathway of purine nucleotide biosynthesis. Catalyzes the first committed step in the biosynthesis of AMP from IMP. This chain is Adenylosuccinate synthetase, found in Pectobacterium atrosepticum (strain SCRI 1043 / ATCC BAA-672) (Erwinia carotovora subsp. atroseptica).